We begin with the raw amino-acid sequence, 581 residues long: 4-hydroxy-3-methylbut-2-en-1-yl diphosphate synthase (flavodoxin) (581 aa).

4 residues coordinate [4Fe-4S] cluster: Cys489, Cys492, Cys523, and Glu530.

The protein belongs to the IspG family. The cofactor is [4Fe-4S] cluster.

The enzyme catalyses (2E)-4-hydroxy-3-methylbut-2-enyl diphosphate + oxidized [flavodoxin] + H2O + 2 H(+) = 2-C-methyl-D-erythritol 2,4-cyclic diphosphate + reduced [flavodoxin]. It participates in isoprenoid biosynthesis; isopentenyl diphosphate biosynthesis via DXP pathway; isopentenyl diphosphate from 1-deoxy-D-xylulose 5-phosphate: step 5/6. Functionally, converts 2C-methyl-D-erythritol 2,4-cyclodiphosphate (ME-2,4cPP) into 1-hydroxy-2-methyl-2-(E)-butenyl 4-diphosphate. This chain is 4-hydroxy-3-methylbut-2-en-1-yl diphosphate synthase (flavodoxin), found in Porphyromonas gingivalis (strain ATCC BAA-308 / W83).